The following is a 455-amino-acid chain: UDP-N-acetylmuramoylalanine--D-glutamate ligase (455 aa).

119 to 125 provides a ligand contact to ATP; sequence GTNGKTT.

It belongs to the MurCDEF family.

The protein localises to the cytoplasm. The enzyme catalyses UDP-N-acetyl-alpha-D-muramoyl-L-alanine + D-glutamate + ATP = UDP-N-acetyl-alpha-D-muramoyl-L-alanyl-D-glutamate + ADP + phosphate + H(+). Its pathway is cell wall biogenesis; peptidoglycan biosynthesis. Functionally, cell wall formation. Catalyzes the addition of glutamate to the nucleotide precursor UDP-N-acetylmuramoyl-L-alanine (UMA). The chain is UDP-N-acetylmuramoylalanine--D-glutamate ligase from Listeria monocytogenes serotype 4b (strain F2365).